The primary structure comprises 103 residues: Mitochondrial import inner membrane translocase subunit TIM13 (103 aa).

The segment at 1-25 (MALSSIFGGGSPSQQSNLPTSSASS) is disordered. Positions 12 to 25 (PSQQSNLPTSSASS) are enriched in polar residues. The Twin CX3C motif signature appears at 55–75 (CFEKCLMAPYTSKQDTCVDQC). Cystine bridges form between Cys55–Cys75 and Cys59–Cys71.

The protein belongs to the small Tim family. As to quaternary structure, heterohexamer; composed of 3 copies of TIM8 and 3 copies of TIM13, named soluble 70 kDa complex. Associates with the TIM22 complex, whose core is composed of TIM22 and TIM54. Interacts with the transmembrane regions of multi-pass transmembrane proteins in transit.

Its subcellular location is the mitochondrion inner membrane. Functionally, mitochondrial intermembrane chaperone that participates in the import and insertion of some multi-pass transmembrane proteins into the mitochondrial inner membrane. Also required for the transfer of beta-barrel precursors from the TOM complex to the sorting and assembly machinery (SAM complex) of the outer membrane. Acts as a chaperone-like protein that protects the hydrophobic precursors from aggregation and guide them through the mitochondrial intermembrane space. The TIM8-TIM13 complex is non essential and only mediates the import of few proteins, while the predominant TIM9-TIM10 70 kDa complex is crucial and mediates the import of much more proteins. In Eremothecium gossypii (strain ATCC 10895 / CBS 109.51 / FGSC 9923 / NRRL Y-1056) (Yeast), this protein is Mitochondrial import inner membrane translocase subunit TIM13 (TIM13).